We begin with the raw amino-acid sequence, 40 residues long: Ribosome-inactivating protein saporin-1 (40 aa).

The protein belongs to the ribosome-inactivating protein family. Type 1 RIP subfamily.

It catalyses the reaction Endohydrolysis of the N-glycosidic bond at one specific adenosine on the 28S rRNA.. Functionally, ribosome-inactivating protein of type 1, inhibits protein synthesis in animal cells. The sequence is that of Ribosome-inactivating protein saporin-1 (SAP1) from Saponaria officinalis (Common soapwort).